We begin with the raw amino-acid sequence, 228 residues long: Cytidylate kinase (228 aa).

7-15 lines the ATP pocket; it reads GPVATGKST.

This sequence belongs to the cytidylate kinase family. Type 1 subfamily.

Its subcellular location is the cytoplasm. It carries out the reaction CMP + ATP = CDP + ADP. It catalyses the reaction dCMP + ATP = dCDP + ADP. In Protochlamydia amoebophila (strain UWE25), this protein is Cytidylate kinase.